Reading from the N-terminus, the 139-residue chain is Small ribosomal subunit protein eS6 (139 aa).

Belongs to the eukaryotic ribosomal protein eS6 family.

This Methanosarcina barkeri (strain Fusaro / DSM 804) protein is Small ribosomal subunit protein eS6.